Reading from the N-terminus, the 341-residue chain is uncharacterized protein (341 aa).

Catalysis depends on residues S111, D247, and H275.

Belongs to the DmpD/TodF/XylF esterase family.

This is an uncharacterized protein from Mycobacterium bovis (strain ATCC BAA-935 / AF2122/97).